Consider the following 385-residue polypeptide: tRNA-specific 2-thiouridylase MnmA (385 aa).

ATP is bound by residues 29-36 (GLSGGVDS) and Leu55. The active-site Nucleophile is the Cys116. The cysteines at positions 116 and 225 are disulfide-linked. Gly141 is an ATP binding site. The tract at residues 175–177 (KDQ) is interaction with tRNA. Residue Cys225 is the Cysteine persulfide intermediate of the active site. The interval 330–331 (RY) is interaction with tRNA.

It belongs to the MnmA/TRMU family.

The protein localises to the cytoplasm. It carries out the reaction S-sulfanyl-L-cysteinyl-[protein] + uridine(34) in tRNA + AH2 + ATP = 2-thiouridine(34) in tRNA + L-cysteinyl-[protein] + A + AMP + diphosphate + H(+). Catalyzes the 2-thiolation of uridine at the wobble position (U34) of tRNA, leading to the formation of s(2)U34. The chain is tRNA-specific 2-thiouridylase MnmA from Prochlorococcus marinus (strain MIT 9301).